Here is a 559-residue protein sequence, read N- to C-terminus: Urocanate hydratase (559 aa).

Residues Gly54–Gly55, Gln132, Gly178–Gly180, Glu198, Arg203, Asn244–Ala245, Gln265–His269, Tyr275–Leu276, and Tyr324 contribute to the NAD(+) site. Cys412 is a catalytic residue. NAD(+) is bound at residue Gly494.

This sequence belongs to the urocanase family. Requires NAD(+) as cofactor.

The protein resides in the cytoplasm. The catalysed reaction is 4-imidazolone-5-propanoate = trans-urocanate + H2O. It participates in amino-acid degradation; L-histidine degradation into L-glutamate; N-formimidoyl-L-glutamate from L-histidine: step 2/3. Functionally, catalyzes the conversion of urocanate to 4-imidazolone-5-propionate. This Photorhabdus laumondii subsp. laumondii (strain DSM 15139 / CIP 105565 / TT01) (Photorhabdus luminescens subsp. laumondii) protein is Urocanate hydratase.